The primary structure comprises 364 residues: Spermidine/putrescine import ATP-binding protein PotA (364 aa).

Positions 5–235 (LSFKDVSKGF…PVNRFVADFI (231 aa)) constitute an ABC transporter domain. 37 to 44 (GPSGCGKT) contacts ATP.

The protein belongs to the ABC transporter superfamily. Spermidine/putrescine importer (TC 3.A.1.11.1) family. As to quaternary structure, the complex is composed of two ATP-binding proteins (PotA), two transmembrane proteins (PotB and PotC) and a solute-binding protein (PotD).

It is found in the cell membrane. The enzyme catalyses ATP + H2O + polyamine-[polyamine-binding protein]Side 1 = ADP + phosphate + polyamineSide 2 + [polyamine-binding protein]Side 1.. In terms of biological role, part of the ABC transporter complex PotABCD involved in spermidine/putrescine import. Responsible for energy coupling to the transport system. This chain is Spermidine/putrescine import ATP-binding protein PotA, found in Staphylococcus epidermidis (strain ATCC 35984 / DSM 28319 / BCRC 17069 / CCUG 31568 / BM 3577 / RP62A).